The sequence spans 116 residues: Flagellar transcriptional regulator FlhD (116 aa).

The protein belongs to the FlhD family. In terms of assembly, homodimer; disulfide-linked. Forms a heterohexamer composed of two FlhC and four FlhD subunits. Each FlhC binds a FlhD dimer, forming a heterotrimer, and a hexamer assembles by dimerization of two heterotrimers.

Its subcellular location is the cytoplasm. Functionally, functions in complex with FlhC as a master transcriptional regulator that regulates transcription of several flagellar and non-flagellar operons by binding to their promoter region. Activates expression of class 2 flagellar genes, including fliA, which is a flagellum-specific sigma factor that turns on the class 3 genes. Also regulates genes whose products function in a variety of physiological pathways. The sequence is that of Flagellar transcriptional regulator FlhD from Pectobacterium carotovorum subsp. carotovorum (strain PC1).